The sequence spans 438 residues: Aspartate--tRNA(Asp/Asn) ligase (438 aa).

L-aspartate is bound at residue Glu176. Residues 198 to 201 are aspartate; it reads QLYK. Position 220 (Arg220) interacts with L-aspartate. ATP-binding positions include 220–222, 228–230, and Glu361; these read RAE and RHL. Residues Glu361 and Ser364 each contribute to the Mg(2+) site. Positions 364 and 368 each coordinate L-aspartate. 409-412 contributes to the ATP binding site; that stretch reads GADR.

The protein belongs to the class-II aminoacyl-tRNA synthetase family. Type 2 subfamily. As to quaternary structure, homodimer. Mg(2+) serves as cofactor.

The protein localises to the cytoplasm. The catalysed reaction is tRNA(Asx) + L-aspartate + ATP = L-aspartyl-tRNA(Asx) + AMP + diphosphate. Functionally, aspartyl-tRNA synthetase with relaxed tRNA specificity since it is able to aspartylate not only its cognate tRNA(Asp) but also tRNA(Asn). Reaction proceeds in two steps: L-aspartate is first activated by ATP to form Asp-AMP and then transferred to the acceptor end of tRNA(Asp/Asn). This Methanococcus vannielii (strain ATCC 35089 / DSM 1224 / JCM 13029 / OCM 148 / SB) protein is Aspartate--tRNA(Asp/Asn) ligase.